We begin with the raw amino-acid sequence, 696 residues long: Probable transporter efuK (696 aa).

Residues 603-642 (SLNGGKMQGASDAKSKVEQGQRAMRKQDEQNGSKWEPVFF) form a disordered region. A compositionally biased stretch (basic and acidic residues) spans 615 to 633 (AKSKVEQGQRAMRKQDEQN).

It belongs to the OSBP family.

Functionally, probable transporter; part of the gene cluster that mediates the biosynthesis of enfumafungin, a glycosylated fernene-type triterpenoid with potent antifungal activity, mediated by its interaction with beta-1,3-glucan synthase and the fungal cell wall. Might be involved in transport of enfumafungin to and across organelle membranes. This Hormonema carpetanum protein is Probable transporter efuK.